The primary structure comprises 389 residues: Methylthioribose kinase (389 aa).

ATP is bound by residues asparagine 37, lysine 52, and 106–108 (EDL). Aspartate 224 is a binding site for substrate. Residue 241–243 (DPE) coordinates ATP. Substrate is bound at residue arginine 331.

This sequence belongs to the methylthioribose kinase family. Homodimer.

The enzyme catalyses 5-(methylsulfanyl)-D-ribose + ATP = 5-(methylsulfanyl)-alpha-D-ribose 1-phosphate + ADP + H(+). It functions in the pathway amino-acid biosynthesis; L-methionine biosynthesis via salvage pathway; S-methyl-5-thio-alpha-D-ribose 1-phosphate from S-methyl-5'-thioadenosine (hydrolase route): step 2/2. In terms of biological role, catalyzes the phosphorylation of methylthioribose into methylthioribose-1-phosphate. This chain is Methylthioribose kinase, found in Exiguobacterium sibiricum (strain DSM 17290 / CCUG 55495 / CIP 109462 / JCM 13490 / 255-15).